Consider the following 175-residue polypeptide: NADH-ubiquinone oxidoreductase chain 6 (175 aa).

5 consecutive transmembrane segments (helical) span residues methionine 1–serine 21, serine 25–leucine 45, phenylalanine 47–valine 67, threonine 88–leucine 108, and tyrosine 149–methionine 169.

This sequence belongs to the complex I subunit 6 family. In terms of assembly, core subunit of respiratory chain NADH dehydrogenase (Complex I) which is composed of 45 different subunits.

The protein localises to the mitochondrion inner membrane. The catalysed reaction is a ubiquinone + NADH + 5 H(+)(in) = a ubiquinol + NAD(+) + 4 H(+)(out). In terms of biological role, core subunit of the mitochondrial membrane respiratory chain NADH dehydrogenase (Complex I) which catalyzes electron transfer from NADH through the respiratory chain, using ubiquinone as an electron acceptor. Essential for the catalytic activity and assembly of complex I. This is NADH-ubiquinone oxidoreductase chain 6 (MT-ND6) from Sus scrofa (Pig).